The sequence spans 734 residues: Terpene cyclase/mutase ntnI (734 aa).

Residues 1-12 are compositionally biased toward polar residues; sequence MQSHIGQWTSTA. The interval 1-26 is disordered; it reads MQSHIGQWTSTAKGHLSRDENGDEKT. Over residues 16 to 26 the composition is skewed to basic and acidic residues; sequence LSRDENGDEKT. PFTB repeat units follow at residues 130–172, 493–534, 570–610, and 619–668; these read AIEI…RLLG, LHNA…SGKT, RTRG…ALAG, and SRKG…GLMH.

The protein belongs to the terpene cyclase/mutase family.

The protein operates within secondary metabolite biosynthesis; terpenoid biosynthesis. Functionally, terpene cyclase/mutase; part of the gene cluster that mediates the biosynthesis of the meroterpenoids nectripenoids A and B, as well as cochliquninone D and isocochliquninone E. The pathway probably begins with the HR-PKS ntnH that catalyzes two chain-extension steps to form a reduced triketide, which then primes the SAT domain in the NR-PKS ntnG to initiate three more cycles of extension to give a linear hexaketide corresponding to the polyketide part of nectripenoids. The FAD-dependent monooxygenase ntnJ then performs an oxidative decarboxylation at C11 of the ntnH/ntnG product, via an electrophilic aromatic hydroxylation with concomitant ipso-decarboxylation. The membrane-bound polyprenyl transferase ntnF then introduces a farnesyl group before the FAD-dependent monooxygenase ntnK functions as the first epoxidase on terminal C12'-C13' olefin, followed by a second epoxidation on C7'-C8' catalyzed by ntnA. The terpene cyclase/mutase ntnI then initiates the sequential tricyclic ring formation through protonation of the terminal epoxide and catalyzes the regioselective and stereoselective 6/6/6-tricyclic ring formation. The cytochrome P450 monooxygenase ntnM may then hydroxylate C1'. The sequence is that of Terpene cyclase/mutase ntnI from Nectria sp.